A 232-amino-acid polypeptide reads, in one-letter code: Ovalbumin-related protein X (232 aa).

The protein belongs to the serpin family. Ov-serpin subfamily. As to expression, expressed in egg white (at protein level).

This is Ovalbumin-related protein X (SERPINB14C) from Gallus gallus (Chicken).